We begin with the raw amino-acid sequence, 379 residues long: 1-deoxy-D-xylulose 5-phosphate reductoisomerase (379 aa).

Thr-10, Gly-11, Ser-12, Ile-13, Asn-39, and Asn-121 together coordinate NADPH. Residue Lys-122 participates in 1-deoxy-D-xylulose 5-phosphate binding. Glu-123 serves as a coordination point for NADPH. A Mn(2+)-binding site is contributed by Asp-147. Residues Ser-148, Glu-149, Ser-173, and His-196 each contribute to the 1-deoxy-D-xylulose 5-phosphate site. Glu-149 is a Mn(2+) binding site. Residue Gly-202 coordinates NADPH. 1-deoxy-D-xylulose 5-phosphate-binding residues include Ser-209, Asn-214, Lys-215, and Glu-218. Glu-218 lines the Mn(2+) pocket.

Belongs to the DXR family. It depends on Mg(2+) as a cofactor. Mn(2+) is required as a cofactor.

The catalysed reaction is 2-C-methyl-D-erythritol 4-phosphate + NADP(+) = 1-deoxy-D-xylulose 5-phosphate + NADPH + H(+). Its pathway is isoprenoid biosynthesis; isopentenyl diphosphate biosynthesis via DXP pathway; isopentenyl diphosphate from 1-deoxy-D-xylulose 5-phosphate: step 1/6. Catalyzes the NADPH-dependent rearrangement and reduction of 1-deoxy-D-xylulose-5-phosphate (DXP) to 2-C-methyl-D-erythritol 4-phosphate (MEP). This chain is 1-deoxy-D-xylulose 5-phosphate reductoisomerase, found in Chlamydia felis (strain Fe/C-56) (Chlamydophila felis).